A 117-amino-acid polypeptide reads, in one-letter code: Large ribosomal subunit protein uL18 (117 aa).

This sequence belongs to the universal ribosomal protein uL18 family. In terms of assembly, part of the 50S ribosomal subunit; part of the 5S rRNA/L5/L18/L25 subcomplex. Contacts the 5S and 23S rRNAs.

Its function is as follows. This is one of the proteins that bind and probably mediate the attachment of the 5S RNA into the large ribosomal subunit, where it forms part of the central protuberance. The protein is Large ribosomal subunit protein uL18 of Vibrio cholerae serotype O1 (strain ATCC 39541 / Classical Ogawa 395 / O395).